Here is a 60-residue protein sequence, read N- to C-terminus: Large ribosomal subunit protein uL29 (60 aa).

This sequence belongs to the universal ribosomal protein uL29 family.

This Fusobacterium nucleatum subsp. nucleatum (strain ATCC 25586 / DSM 15643 / BCRC 10681 / CIP 101130 / JCM 8532 / KCTC 2640 / LMG 13131 / VPI 4355) protein is Large ribosomal subunit protein uL29.